The following is a 138-amino-acid chain: Large ribosomal subunit protein bL19 (138 aa).

Belongs to the bacterial ribosomal protein bL19 family.

Its function is as follows. This protein is located at the 30S-50S ribosomal subunit interface and may play a role in the structure and function of the aminoacyl-tRNA binding site. This chain is Large ribosomal subunit protein bL19, found in Leptospira interrogans serogroup Icterohaemorrhagiae serovar copenhageni (strain Fiocruz L1-130).